Reading from the N-terminus, the 238-residue chain is Ribonuclease PH (238 aa).

Phosphate-binding positions include Arg86 and 124–126 (GTR).

Belongs to the RNase PH family. In terms of assembly, homohexameric ring arranged as a trimer of dimers.

The catalysed reaction is tRNA(n+1) + phosphate = tRNA(n) + a ribonucleoside 5'-diphosphate. Phosphorolytic 3'-5' exoribonuclease that plays an important role in tRNA 3'-end maturation. Removes nucleotide residues following the 3'-CCA terminus of tRNAs; can also add nucleotides to the ends of RNA molecules by using nucleoside diphosphates as substrates, but this may not be physiologically important. Probably plays a role in initiation of 16S rRNA degradation (leading to ribosome degradation) during starvation. In Brucella melitensis biotype 2 (strain ATCC 23457), this protein is Ribonuclease PH.